An 82-amino-acid polypeptide reads, in one-letter code: Small ribosomal subunit protein uS17 (82 aa).

Belongs to the universal ribosomal protein uS17 family. In terms of assembly, part of the 30S ribosomal subunit.

In terms of biological role, one of the primary rRNA binding proteins, it binds specifically to the 5'-end of 16S ribosomal RNA. The polypeptide is Small ribosomal subunit protein uS17 (Shewanella sp. (strain MR-7)).